Here is a 3623-residue protein sequence, read N- to C-terminus: MMNMSLPFLWSLLTLLIFAEVNGEAGELELQRQKRSINLQQPRMATERGNLVFLTGSAQNIEFRTGSLGKIKLNDEDLSECLHQIQKNKEDIIELKGSAIGLPQNISSQIYQLNSKLVDLERKFQGLQQTVDKKVCSSNPCQNGGTCLNLHDSFFCICPPQWKGPLCSADVNECEIYSGTPLSCQNGGTCVNTMGSYSCHCPPETYGPQCASKYDDCEGGSVARCVHGICEDLMREQAGEPKYSCVCDAGWMFSPNSPACTLDRDECSFQPGPCSTLVQCFNTQGSFYCGACPTGWQGNGYICEDINECEINNGGCSVAPPVECVNTPGSSHCQACPPGYQGDGRVCTLTDICSVSNGGCHPDASCSSTLGSLPLCTCLPGYTGNGYGPNGCVQLSNICLSHPCLNGQCIDTVSGYFCKCDSGWTGVNCTENINECLSNPCLNGGTCVDGVDSFSCECTRLWTGALCQVPQQVCGESLSGINGSFSYRSPDVGYVHDVNCFWVIKTEMGKVLRITFTFFRLESMDNCPHEFLQVYDGDSSSAFQLGRFCGSSLPHELLSSDNALYFHLYSEHLRNGRGFTVRWETQQPECGGILTGPYGSIKSPGYPGNYPPGRDCVWIVVTSPDLLVTFTFGTLSLEHHDDCNKDYLEIRDGPLYQDPLLGKFCTTFSVPPLQTTGPFARIHFHSDSQISDQGFHITYLTSPSDLRCGGNYTDPEGELFLPELSGPFTHTRQCVYMMKQPQGEQIQINFTHVELQCQSDSSQNYIEVRDGETLLGKVCGNGTISHIKSITNSVWIRFKIDASVEKASFRAVYQVACGDELTGEGVIRSPFFPNVYPGERTCRWTIHQPQSQVILLNFTVFEIGSSAHCETDYVEIGSSSILGSPENKKYCGTDIPSFITSVYNFLYVTFVKSSSTENHGFMAKFSAEDLACGEILTESTGTIQSPGHPNVYPHGINCTWHILVQPNHLIHLMFETFHLEFHYNCTNDYLEVYDTDSETSLGRYCGKSIPPSLTSSGNSLMLVFVTDSDLAYEGFLINYEAISAATACLQDYTDDLGTFTSPNFPNNYPNNWECIYRITVRTGQLIAVHFTNFSLEEAIGNYYTDFLEIRDGGYEKSPLLGIFYGSNLPPTIISHSNKLWLKFKSDQIDTRSGFSAYWDGSSTGCGGNLTTSSGTFISPNYPMPYYHSSECYWWLKSSHGSAFELEFKDFHLEHHPNCTLDYLAVYDGPSSNSHLLTQLCGDEKPPLIRSSGDSMFIKLRTDEGQQGRGFKAEYRQTCENVVIVNQTYGILESIGYPNPYSENQHCNWTIRATTGNTVNYTFLAFDLEHHINCSTDYLELYDGPRQMGRYCGVDLPPPGSTTSSKLQVLLLTDGVGRREKGFQMQWFVYGCGGELSGATGSFSSPGFPNRYPPNKECIWYIRTDPGSSIQLTIHDFDVEYHSRCNFDVLEIYGGPDFHSPRIAQLCTQRSPENPMQVSSTGNELAIRFKTDLSINGRGFNASWQAVTGGCGGIFQAPSGEIHSPNYPSPYRSNTDCSWVIRVDRNHRVLLNFTDFDLEPQDSCIMAYDGLSSTMSRLARTCGREQLANPIVSSGNSLFLRFQSGPSRQNRGFRAQFRQACGGHILTSSFDTVSSPRFPANYPNNQNCSWIIQAQPPLNHITLSFTHFELERSTTCARDFVEILDGGHEDAPLRGRYCGTDMPHPITSFSSALTLRFVSDSSISAGGFHTTVTASVSACGGTFYMAEGIFNSPGYPDIYPPNVECVWNIVSSPGNRLQLSFISFQLEDSQDCSRDFVEIREGNATGHLVGRYCGNSFPLNYSSIVGHTLWVRFISDGSGSGTGFQATFMKIFGNDNIVGTHGKVASPFWPENYPHNSNYQWTVNVNASHVVHGRILEMDIEEIQNCYYDKLRIYDGPSIHARLIGAYCGTQTESFSSTGNSLTFHFYSDSSISGKGFLLEWFAVDAPDGVLPTIAPGACGGFLRTGDAPVFLFSPGWPDSYSNRVDCTWLIQAPDSTVELNILSLDIESHRTCAYDSLVIRDGDNNLAQQLAVLCGREIPGPIRSTGEYMFIRFTSDSSVTRAGFNASFHKSCGGYLHADRGIITSPKYPETYPSNLNCSWHVLVQSGLTIAVHFEQPFQIPNGDSSCNQGDYLVLRNGPDICSPPLGPPGGNGHFCGSHASSTLFTSDNQMFVQFISDHSNEGQGFKIKYEAKSLACGGNVYIHDADSAGYVTSPNHPHNYPPHADCIWILAAPPETRIQLQFEDRFDIEVTPNCTSNYLELRDGVDSDAPILSKFCGTSLPSSQWSSGEVMYLRFRSDNSPTHVGFKAKYSIAQCGGRVPGQSGVVESIGHPTLPYRDNLFCEWHLQGLSGHYLTISFEDFNLQNSSGCEKDFVEIWDNHTSGNILGRYCGNTIPDSIDTSSNTAVVRFVTDGSVTASGFRLRFESSMEECGGDLQGSIGTFTSPNYPNPNPHGRICEWRITAPEGRRITLMFNNLRLATHPSCNNEHVIVFNGIRSNSPQLEKLCSSVNVSNEIKSSGNTMKVIFFTDGSRPYGGFTASYTSSEDAVCGGSLPNTPEGNFTSPGYDGVRNYSRNLNCEWTLSNPNQGNSSISIHFEDFYLESHQDCQFDVLEFRVGDADGPLMWRLCGPSKPTLPLVIPYSQVWIHFVTNERVEHIGFHAKYSFTDCGGIQIGDSGVITSPNYPNAYDSLTHCSSLLEAPQGHTITLTFSDFDIEPHTTCAWDSVTVRNGGSPESPIIGQYCGNSNPRTIQSGSNQLVVTFNSDHSLQGGGFYATWNTQTLGCGGIFHSDNGTIRSPHWPQNFPENSRCSWTAITHKSKHLEISFDNNFLIPSGDGQCQNSFVKVWAGTEEVDKALLATGCGNVAPGPVITPSNTFTAVFQSQEAPAQGFSASFVSRCGSNFTGPSGYIISPNYPKQYDNNMNCTYVIEANPLSVVLLTFVSFHLEARSAVTGSCVNDGVHIIRGYSVMSTPFATVCGDEMPAPLTIAGPVLLNFYSNEQITDFGFKFSYRIISCGGVFNFSSGIITSPAYSYADYPNDMHCLYTITVSDDKVIELKFSDFDVVPSTSCSHDYLAIYDGANTSDPLLGKFCGSKRPPNVKSSNNSMLLVFKTDSFQTAKGWKMSFRQTLGPQQGCGGYLTGSNNTFASPDSDSNGMYDKNLNCVWIIIAPVNKVIHLTFNTFALEAASTRQRCLYDYVKLYDGDSENANLAGTFCGSTVPAPFISSGNFLTVQFISDLTLEREGFNATYTIMDMPCGGTYNATWTPQNISSPNSSDPDVPFSICTWVIDSPPHQQVKITVWALQLTSQDCTQNYLQLQDSPQGHGNSRFQFCGRNASAVPVFYSSMSTAMVIFKSGVVNRNSRMSFTYQIADCNRDYHKAFGNLRSPGWPDNYDNDKDCTVTLTAPQNHTISLFFHSLGIENSVECRNDFLEVRNGSNSNSPLLGKYCGTLLPNPVFSQNNELYLRFKSDSVTSDRGYEIIWTSSPSGCGGTLYGDRGSFTSPGYPGTYPNNTYCEWVLVAPAGRLVTINFYFISIDDPGDCVQNYLTLYDGPNASSPSSGPYCGGDTSIAPFVASSNQVFIKFHADYARRPSAFRLTWDS.

A signal peptide spans 1 to 23 (MMNMSLPFLWSLLTLLIFAEVNG). The propeptide at 24 to 35 (EAGELELQRQKR) is removed in mature form. Residues 42–49 (PRMATERG) are interaction with AMN. N-linked (GlcNAc...) asparagine glycosylation is present at Asn-105. The region spanning 132 to 168 (DKKVCSSNPCQNGGTCLNLHDSFFCICPPQWKGPLCS) is the EGF-like 1 domain. 9 disulfides stabilise this stretch: Cys-136/Cys-147, Cys-141/Cys-156, Cys-158/Cys-167, Cys-174/Cys-190, Cys-184/Cys-199, Cys-201/Cys-210, Cys-267/Cys-280, Cys-274/Cys-289, and Cys-292/Cys-303. The EGF-like 2; calcium-binding domain maps to 170–211 (DVNECEIYSGTPLSCQNGGTCVNTMGSYSCHCPPETYGPQCA). The EGF-like 3; calcium-binding domain occupies 263–304 (DRDECSFQPGPCSTLVQCFNTQGSFYCGACPTGWQGNGYICE). Residues 305-348 (DINECEINNGGCSVAPPVECVNTPGSSHCQACPPGYQGDGRVCT) enclose the EGF-like 4; calcium-binding domain. EGF-like domains follow at residues 349-385 (LTDICSVSNGGCHPDASCSSTLGSLPLCTCLPGYTGN) and 395-430 (LSNICLSHPCLNGQCIDTVSGYFCKCDSGWTGVNCT). Intrachain disulfides connect Cys-353-Cys-366, Cys-360-Cys-376, Cys-399-Cys-409, Cys-404-Cys-418, Cys-420-Cys-429, Cys-436-Cys-447, Cys-441-Cys-456, Cys-458-Cys-467, Cys-474-Cys-500, Cys-527-Cys-549, Cys-590-Cys-616, Cys-643-Cys-665, and Cys-708-Cys-734. The N-linked (GlcNAc...) asparagine glycan is linked to Asn-428. One can recognise an EGF-like 7; calcium-binding domain in the interval 432–468 (NINECLSNPCLNGGTCVDGVDSFSCECTRLWTGALCQ). CUB domains lie at 474–586 (CGES…WETQ), 590–702 (CGGI…YLTS), 708–816 (CGGN…YQVA), 816–928 (ACGD…FSAE), 932–1042 (CGEI…YEAI), 1048–1161 (CLQD…WDGS), 1165–1277 (CGGN…YRQT), 1278–1389 (CENV…WFVY), 1391–1506 (CGGE…WQAV), 1510–1619 (CGGI…FRQA), 1620–1734 (CGGH…VTAS), 1738–1850 (CGGT…FMKI), 1852–1963 (GNDN…WFAV), 1978–2091 (CGGF…FHKS), 2092–2213 (CGGY…YEAK), 2217–2334 (CGGN…YSIA), 2336–2448 (CGGR…FESS), 2452–2565 (CGGD…YTSS), 2570–2687 (CGGS…YSFT), 2689–2801 (CGGI…WNTQ), 2805–2919 (CGGI…FVSR), 2920–3035 (CGSN…YRII), 3037–3150 (CGGV…FRQT), 3157–3274 (CGGY…YTIM), 3278–3393 (CGGT…YQIA), 3395–3507 (CNRD…WTSS), and 3511–3623 (CGGT…TWDS). Asn-482 carries an N-linked (GlcNAc...) asparagine glycan. N-linked (GlcNAc...) asparagine glycans are attached at residues Asn-711, Asn-749, Asn-781, and Asn-857. 2 cysteine pairs are disulfide-bonded: Cys-869-Cys-891 and Cys-932-Cys-958. An N-linked (GlcNAc...) asparagine glycan is attached at Asn-957. Glu-980 provides a ligand contact to Ca(2+). N-linked (GlcNAc...) asparagine glycosylation occurs at Asn-984. Cys-985 and Cys-1005 are joined by a disulfide. Ca(2+)-binding residues include Asp-988, Asp-1027, Asp-1029, and Leu-1030. Cys-1048 and Cys-1074 are joined by a disulfide. N-linked (GlcNAc...) asparagine glycosylation occurs at Asn-1092. Residues Glu-1096, Asp-1105, Asp-1146, Ile-1148, and Asp-1149 each coordinate Ca(2+). Cys-1165 and Cys-1191 form a disulfide bridge. Asn-1168 is a glycosylation site (N-linked (GlcNAc...) asparagine). Glu-1213 provides a ligand contact to Ca(2+). Asn-1217 carries N-linked (GlcNAc...) asparagine glycosylation. Cys-1218 and Cys-1240 are joined by a disulfide. Residues Asp-1221, Asp-1262, Gly-1264, and Gln-1265 each coordinate Ca(2+). Cys-1278 and Cys-1306 are joined by a disulfide. Residues Asn-1285, Asn-1307, and Asn-1319 are each glycosylated (N-linked (GlcNAc...) asparagine). Residue Glu-1328 participates in Ca(2+) binding. Asn-1332 carries an N-linked (GlcNAc...) asparagine glycan. Cys-1333 and Cys-1351 are joined by a disulfide. Ca(2+) contacts are provided by Asp-1336, Asp-1373, and Val-1375. 2 cysteine pairs are disulfide-bonded: Cys-1391–Cys-1417 and Cys-1444–Cys-1466. The N-linked (GlcNAc...) asparagine glycan is linked to Asn-1500. A disulfide bond links Cys-1510 and Cys-1536. N-linked (GlcNAc...) asparagine glycosylation is present at Asn-1551. Disulfide bonds link Cys-1563–Cys-1581, Cys-1620–Cys-1647, Cys-1675–Cys-1697, Cys-1738–Cys-1764, and Cys-1791–Cys-1812. An N-linked (GlcNAc...) asparagine glycan is attached at Asn-1646. Residues Asn-1802, Asn-1819, and Asn-1885 are each glycosylated (N-linked (GlcNAc...) asparagine). 3 disulfide bridges follow: Cys-1905–Cys-1927, Cys-1978–Cys-2006, and Cys-2032–Cys-2054. Residues Asn-2085 and Asn-2117 are each glycosylated (N-linked (GlcNAc...) asparagine). 2 disulfide bridges follow: Cys-2092–Cys-2118 and Cys-2217–Cys-2247. The N-linked (GlcNAc...) asparagine glycan is linked to Asn-2274. Cystine bridges form between Cys-2275-Cys-2297 and Cys-2336-Cys-2363. Residues Asn-2386 and Asn-2400 are each glycosylated (N-linked (GlcNAc...) asparagine). 3 disulfides stabilise this stretch: Cys-2390–Cys-2411, Cys-2452–Cys-2478, and Cys-2505–Cys-2527. N-linked (GlcNAc...) asparagine glycosylation is found at Asn-2531, Asn-2581, Asn-2592, and Asn-2610. Cysteines 2570 and 2599 form a disulfide. 7 cysteine pairs are disulfide-bonded: Cys-2628-Cys-2649, Cys-2689-Cys-2715, Cys-2742-Cys-2764, Cys-2805-Cys-2831, Cys-2860-Cys-2883, Cys-2920-Cys-2946, and Cys-2977-Cys-2999. N-linked (GlcNAc...) asparagine glycosylation is present at Asn-2813. N-linked (GlcNAc...) asparagine glycosylation is found at Asn-2923 and Asn-2945. Thr-3008 is subject to Phosphothreonine. 2 disulfides stabilise this stretch: Cys-3037/Cys-3064 and Cys-3091/Cys-3113. Asn-3042, Asn-3103, Asn-3125, and Asn-3165 each carry an N-linked (GlcNAc...) asparagine glycan. 2 cysteine pairs are disulfide-bonded: Cys-3157-Cys-3185 and Cys-3215-Cys-3237. Asn-3268, Asn-3283, Asn-3290, and Asn-3295 each carry an N-linked (GlcNAc...) asparagine glycan. 2 cysteine pairs are disulfide-bonded: Cys-3278-Cys-3306 and Cys-3332-Cys-3354. Residue Asn-3357 is glycosylated (N-linked (GlcNAc...) asparagine). Cys-3395 and Cys-3421 are joined by a disulfide. N-linked (GlcNAc...) asparagine glycans are attached at residues Asn-3430, Asn-3457, Asn-3533, and Asn-3576. Disulfide bonds link Cys-3448–Cys-3470, Cys-3511–Cys-3537, and Cys-3564–Cys-3586.

Interacts with AMN. Component of the cubam complex composed of one CUBN trimer and one AMN chain. The cubam complex can dimerize. Interacts with LRP2 in a dual-receptor complex in a calcium-dependent manner. Found in a complex with PID1/PCLI1, LRP1 and CUBNI. Interacts with LRP1 and PID1/PCLI1. In terms of processing, the precursor is cleaved by a trans-Golgi proteinase furin, removing a propeptide. Post-translationally, N-glycosylated. Detected in kidney cortex (at protein level). Expressed in kidney proximal tubule cells, placenta, visceral yolk-sac cells and in absorptive intestinal cells. Expressed in the epithelium of intestine and kidney.

Its subcellular location is the apical cell membrane. The protein resides in the cell membrane. The protein localises to the membrane. It localises to the coated pit. It is found in the endosome. Its subcellular location is the lysosome membrane. Its function is as follows. Endocytic receptor which plays a role in lipoprotein, vitamin and iron metabolism by facilitating their uptake. Acts together with LRP2 to mediate endocytosis of high-density lipoproteins, GC, hemoglobin, ALB, TF and SCGB1A1. Acts together with AMN to mediate endocytosis of the CBLIF-cobalamin complex. Binds to ALB, MB, Kappa and lambda-light chains, TF, hemoglobin, GC, SCGB1A1, APOA1, high density lipoprotein, and the CBLIF-cobalamin complex. Ligand binding requires calcium. Serves as important transporter in several absorptive epithelia, including intestine, renal proximal tubules and embryonic yolk sac. May play an important role in the development of the peri-implantation embryo through internalization of APOA1 and cholesterol. Binds to LGALS3 at the maternal-fetal interface. The sequence is that of Cubilin (CUBN) from Homo sapiens (Human).